The primary structure comprises 417 residues: Serine hydroxymethyltransferase (417 aa).

(6S)-5,6,7,8-tetrahydrofolate-binding positions include leucine 121 and 125–127; that span reads GHL. Position 229 is an N6-(pyridoxal phosphate)lysine (lysine 229). 355 to 357 contributes to the (6S)-5,6,7,8-tetrahydrofolate binding site; sequence SPF.

It belongs to the SHMT family. Homodimer. The cofactor is pyridoxal 5'-phosphate.

It is found in the cytoplasm. It catalyses the reaction (6R)-5,10-methylene-5,6,7,8-tetrahydrofolate + glycine + H2O = (6S)-5,6,7,8-tetrahydrofolate + L-serine. The protein operates within one-carbon metabolism; tetrahydrofolate interconversion. It functions in the pathway amino-acid biosynthesis; glycine biosynthesis; glycine from L-serine: step 1/1. Functionally, catalyzes the reversible interconversion of serine and glycine with tetrahydrofolate (THF) serving as the one-carbon carrier. This reaction serves as the major source of one-carbon groups required for the biosynthesis of purines, thymidylate, methionine, and other important biomolecules. Also exhibits THF-independent aldolase activity toward beta-hydroxyamino acids, producing glycine and aldehydes, via a retro-aldol mechanism. This chain is Serine hydroxymethyltransferase, found in Shewanella oneidensis (strain ATCC 700550 / JCM 31522 / CIP 106686 / LMG 19005 / NCIMB 14063 / MR-1).